The primary structure comprises 414 residues: Nucleoredoxin (414 aa).

The Thioredoxin domain occupies 131 to 305 (LLVKDDPEGL…ELNAVQLNEG (175 aa)).

This sequence belongs to the nucleoredoxin family.

The protein resides in the cytoplasm. It is found in the cytosol. It localises to the nucleus. It carries out the reaction [protein]-dithiol + NAD(+) = [protein]-disulfide + NADH + H(+). The catalysed reaction is [protein]-dithiol + NADP(+) = [protein]-disulfide + NADPH + H(+). Its function is as follows. Functions as a redox-dependent negative regulator of the Wnt signaling pathway. The polypeptide is Nucleoredoxin (nxn) (Xenopus laevis (African clawed frog)).